The sequence spans 187 residues: Large ribosomal subunit protein uL22B (187 aa).

This sequence belongs to the universal ribosomal protein uL22 family. In terms of assembly, component of the large ribosomal subunit (LSU). Mature yeast ribosomes consist of a small (40S) and a large (60S) subunit. The 40S small subunit contains 1 molecule of ribosomal RNA (18S rRNA) and at least 33 different proteins. The large 60S subunit contains 3 rRNA molecules (25S, 5.8S and 5S rRNA) and at least 46 different proteins. uL22 is associated with the polypeptide exit tunnel.

Its subcellular location is the cytoplasm. In terms of biological role, component of the ribosome, a large ribonucleoprotein complex responsible for the synthesis of proteins in the cell. The small ribosomal subunit (SSU) binds messenger RNAs (mRNAs) and translates the encoded message by selecting cognate aminoacyl-transfer RNA (tRNA) molecules. The large subunit (LSU) contains the ribosomal catalytic site termed the peptidyl transferase center (PTC), which catalyzes the formation of peptide bonds, thereby polymerizing the amino acids delivered by tRNAs into a polypeptide chain. The nascent polypeptides leave the ribosome through a tunnel in the LSU and interact with protein factors that function in enzymatic processing, targeting, and the membrane insertion of nascent chains at the exit of the ribosomal tunnel. This is Large ribosomal subunit protein uL22B (rpl1702) from Schizosaccharomyces pombe (strain 972 / ATCC 24843) (Fission yeast).